The following is a 233-amino-acid chain: Phosphatidylserine decarboxylase proenzyme (233 aa).

The Schiff-base intermediate with substrate; via pyruvic acid role is filled by Ser-190. Ser-190 carries the post-translational modification Pyruvic acid (Ser); by autocatalysis.

The protein belongs to the phosphatidylserine decarboxylase family. PSD-A subfamily. In terms of assembly, heterodimer of a large membrane-associated beta subunit and a small pyruvoyl-containing alpha subunit. Pyruvate serves as cofactor. In terms of processing, is synthesized initially as an inactive proenzyme. Formation of the active enzyme involves a self-maturation process in which the active site pyruvoyl group is generated from an internal serine residue via an autocatalytic post-translational modification. Two non-identical subunits are generated from the proenzyme in this reaction, and the pyruvate is formed at the N-terminus of the alpha chain, which is derived from the carboxyl end of the proenzyme. The post-translation cleavage follows an unusual pathway, termed non-hydrolytic serinolysis, in which the side chain hydroxyl group of the serine supplies its oxygen atom to form the C-terminus of the beta chain, while the remainder of the serine residue undergoes an oxidative deamination to produce ammonia and the pyruvoyl prosthetic group on the alpha chain.

It localises to the cell membrane. It catalyses the reaction a 1,2-diacyl-sn-glycero-3-phospho-L-serine + H(+) = a 1,2-diacyl-sn-glycero-3-phosphoethanolamine + CO2. It participates in phospholipid metabolism; phosphatidylethanolamine biosynthesis; phosphatidylethanolamine from CDP-diacylglycerol: step 2/2. Functionally, catalyzes the formation of phosphatidylethanolamine (PtdEtn) from phosphatidylserine (PtdSer). The protein is Phosphatidylserine decarboxylase proenzyme of Azorhizobium caulinodans (strain ATCC 43989 / DSM 5975 / JCM 20966 / LMG 6465 / NBRC 14845 / NCIMB 13405 / ORS 571).